Consider the following 415-residue polypeptide: Lupus La protein homolog (415 aa).

The region spanning 7–99 is the HTH La-type RNA-binding domain; it reads NEKMTALEAK…RRSPSRPLPE (93 aa). Residues Ser-92 and Ser-94 each carry the phosphoserine modification. The region spanning 111-187 is the RRM domain; sequence RSVYIKGFPT…TNLLILFKED (77 aa). Lys-116 carries the post-translational modification N6-acetyllysine. Residue Thr-120 is modified to Phosphothreonine. 3 positions are modified to N6-acetyllysine: Lys-128, Lys-327, and Lys-356. The xRRM domain maps to 226–346; the sequence is EGKMGCLLKF…GRFKGSHVFT (121 aa). The segment at 349 to 415 is disordered; sequence RRFKGKGKGN…KKRENGARDK (67 aa). The residue at position 377 (Thr-377) is a Phosphothreonine. Over residues 377–415 the composition is skewed to basic and acidic residues; sequence TRFDDDDRRRGPMKRGRDGRDREEPASKHKKRENGARDK.

In terms of assembly, interacts with DDX15. May interact with RUFY1. Phosphorylated.

It is found in the nucleus. Functionally, binds to the 3' poly(U) terminus of nascent RNA polymerase III transcripts, protecting them from exonuclease digestion and facilitating their folding and maturation. In Mus musculus (Mouse), this protein is Lupus La protein homolog (Ssb).